The chain runs to 71 residues: Heat-stable enterotoxin B (71 aa).

The N-terminal stretch at 1–19 (MKKIILALVLMLFSFCTLG) is a signal peptide. The propeptide occupies 20–52 (QETASMHLDDTLSAPIAAEINRKACDTQTPSPS). Intrachain disulfides connect Cys-59-Cys-64, Cys-60-Cys-68, and Cys-63-Cys-71.

The protein belongs to the heat-stable enterotoxin family.

It localises to the secreted. Its function is as follows. Toxin which activates the particulate form of guanylate cyclase and increases cyclic GMP levels within the host intestinal epithelial cells. Could play an important role in pathogenesis. This Yersinia enterocolitica protein is Heat-stable enterotoxin B (ystB).